The primary structure comprises 68 residues: 1-carboxybiuret hydrolase subunit AtzG (68 aa).

In terms of assembly, heterotetramer consisting of 2 AtzE and 2 AtzG subunits.

It functions in the pathway xenobiotic degradation; atrazine degradation. Functionally, important for the activity of the AtzE subunit of 1-carboxybiuret hydrolase. This is 1-carboxybiuret hydrolase subunit AtzG from Pseudomonas sp. (strain ADP).